Consider the following 337-residue polypeptide: Fructose-1,6-bisphosphatase class 1 (337 aa).

4 residues coordinate Mg(2+): glutamate 94, aspartate 116, leucine 118, and aspartate 119. Residues aspartate 119–serine 122, asparagine 210, and lysine 276 contribute to the substrate site. Glutamate 282 provides a ligand contact to Mg(2+).

It belongs to the FBPase class 1 family. In terms of assembly, homotetramer. Mg(2+) serves as cofactor.

Its subcellular location is the cytoplasm. The catalysed reaction is beta-D-fructose 1,6-bisphosphate + H2O = beta-D-fructose 6-phosphate + phosphate. Its pathway is carbohydrate biosynthesis; gluconeogenesis. The polypeptide is Fructose-1,6-bisphosphatase class 1 (Burkholderia orbicola (strain MC0-3)).